A 378-amino-acid chain; its full sequence is Chaperone protein DnaJ (378 aa).

A J domain is found at 5 to 70 (DYYEVLSVGR…DKKAAYDQFG (66 aa)). The CR-type zinc-finger motif lies at 133–211 (GLTKELRIPT…CHGEGRVEKS (79 aa)). Cys146, Cys149, Cys163, Cys166, Cys185, Cys188, Cys199, and Cys202 together coordinate Zn(2+). CXXCXGXG motif repeat units lie at residues 146-153 (CDTCDGSG), 163-170 (CGTCHGQG), 185-192 (CPTCHGRG), and 199-206 (CNSCHGEG).

The protein belongs to the DnaJ family. In terms of assembly, homodimer. The cofactor is Zn(2+).

The protein resides in the cytoplasm. In terms of biological role, participates actively in the response to hyperosmotic and heat shock by preventing the aggregation of stress-denatured proteins and by disaggregating proteins, also in an autonomous, DnaK-independent fashion. Unfolded proteins bind initially to DnaJ; upon interaction with the DnaJ-bound protein, DnaK hydrolyzes its bound ATP, resulting in the formation of a stable complex. GrpE releases ADP from DnaK; ATP binding to DnaK triggers the release of the substrate protein, thus completing the reaction cycle. Several rounds of ATP-dependent interactions between DnaJ, DnaK and GrpE are required for fully efficient folding. Also involved, together with DnaK and GrpE, in the DNA replication of plasmids through activation of initiation proteins. This is Chaperone protein DnaJ from Shewanella woodyi (strain ATCC 51908 / MS32).